The chain runs to 250 residues: UPF0494 membrane protein PB2B2.07c (250 aa).

Transmembrane regions (helical) follow at residues 98–118 (WPLL…NFEV), 144–164 (IAIY…MFPL), and 179–199 (MIIA…GATI).

The protein belongs to the UPF0494 family.

It localises to the cytoplasm. It is found in the endoplasmic reticulum. The protein localises to the golgi apparatus. Its subcellular location is the membrane. This chain is UPF0494 membrane protein PB2B2.07c, found in Schizosaccharomyces pombe (strain 972 / ATCC 24843) (Fission yeast).